The chain runs to 223 residues: Triosephosphate isomerase (223 aa).

6-8 (NLK) lines the substrate pocket. H86 acts as the Electrophile in catalysis. Residue E151 is the Proton acceptor of the active site. G157 and S187 together coordinate substrate.

Belongs to the triosephosphate isomerase family. Homodimer.

It is found in the cytoplasm. It carries out the reaction D-glyceraldehyde 3-phosphate = dihydroxyacetone phosphate. Its pathway is carbohydrate biosynthesis; gluconeogenesis. It participates in carbohydrate degradation; glycolysis; D-glyceraldehyde 3-phosphate from glycerone phosphate: step 1/1. Functionally, involved in the gluconeogenesis. Catalyzes stereospecifically the conversion of dihydroxyacetone phosphate (DHAP) to D-glyceraldehyde-3-phosphate (G3P). The protein is Triosephosphate isomerase of Campylobacter jejuni subsp. jejuni serotype O:2 (strain ATCC 700819 / NCTC 11168).